Consider the following 362-residue polypeptide: Phosphoserine aminotransferase (362 aa).

Ser9 and Arg42 together coordinate L-glutamate. Residues Gly76–Arg77, Trp102, Thr153, Asp174, and Gln197 each bind pyridoxal 5'-phosphate. Residue Lys198 is modified to N6-(pyridoxal phosphate)lysine. Asn239–Thr240 contributes to the pyridoxal 5'-phosphate binding site.

It belongs to the class-V pyridoxal-phosphate-dependent aminotransferase family. SerC subfamily. In terms of assembly, homodimer. It depends on pyridoxal 5'-phosphate as a cofactor.

Its subcellular location is the cytoplasm. It carries out the reaction O-phospho-L-serine + 2-oxoglutarate = 3-phosphooxypyruvate + L-glutamate. It catalyses the reaction 4-(phosphooxy)-L-threonine + 2-oxoglutarate = (R)-3-hydroxy-2-oxo-4-phosphooxybutanoate + L-glutamate. It participates in amino-acid biosynthesis; L-serine biosynthesis; L-serine from 3-phospho-D-glycerate: step 2/3. It functions in the pathway cofactor biosynthesis; pyridoxine 5'-phosphate biosynthesis; pyridoxine 5'-phosphate from D-erythrose 4-phosphate: step 3/5. In terms of biological role, catalyzes the reversible conversion of 3-phosphohydroxypyruvate to phosphoserine and of 3-hydroxy-2-oxo-4-phosphonooxybutanoate to phosphohydroxythreonine. The sequence is that of Phosphoserine aminotransferase from Salmonella choleraesuis (strain SC-B67).